A 1801-amino-acid chain; its full sequence is Protein mono-ADP-ribosyltransferase PARP14 (1801 aa).

Serine 33 carries the phosphoserine modification. Positions 109 to 132 (SKTKEDVKEPDVSEELDTKLPLDG) are disordered. Macro domains lie at 791–978 (KCFS…KTVF), 1003–1190 (WEKG…ARRA), and 1216–1387 (DSGV…KKRE). A glycoprotein contacts are provided by residues asparagine 824, leucine 833, 922-926 (SSGVF), aspartate 961, 1023-1024 (VQ), serine 1034, 1046-1049 (LSKS), 1133-1137 (GTGNL), 1175-1178 (DHEN), 1235-1236 (DI), serine 1247, valine 1258, 1332-1336 (GTGNA), and phenylalanine 1371. 2 positions are modified to phosphoserine: serine 1403 and serine 1411. Positions 1523-1601 (EQESRADCIS…SLSVQRLTKS (79 aa)) constitute a WWE domain. One can recognise a PARP catalytic domain in the interval 1605-1801 (IPAHWSDMKQ…YPEYLITFRK (197 aa)).

Belongs to the ARTD/PARP family. As to quaternary structure, interacts with STAT6. Interacts with PARP10. Interacts with PARP9 in IFNG-stimulated macrophages; the interaction prevents PARP14-mediated STAT1 and STAT6 ADP-riboslylation. Auto-ADP-ribosylated. Expressed in macrophages.

It localises to the nucleus. The protein localises to the cytoplasm. It catalyses the reaction L-glutamyl-[protein] + NAD(+) = 5-O-(ADP-D-ribosyl)-L-glutamyl-[protein] + nicotinamide. Functionally, ADP-ribosyltransferase that mediates mono-ADP-ribosylation of glutamate residues on target proteins. In contrast to PARP1 and PARP2, it is not able to mediate poly-ADP-ribosylation. Has been shown to catalyze the mono-ADP-ribosylation of STAT1 at 'Glu-657' and 'Glu-705', thus decreasing STAT1 phosphorylation which negatively regulates pro-inflammatory cytokine production in macrophages in response to IFNG stimulation. However, the role of ADP-ribosylation in the prevention of STAT1 phosphorylation has been called into question and it has been suggested that the inhibition of phosphorylation may be the result of sumoylation of STAT1 'Lys-703'. Mono-ADP-ribosylates STAT6; enhancing STAT6-dependent transcription. In macrophages, positively regulates MRC1 expression in response to IL4 stimulation by promoting STAT6 phosphorylation. Mono-ADP-ribosylates PARP9. The polypeptide is Protein mono-ADP-ribosyltransferase PARP14 (Homo sapiens (Human)).